A 185-amino-acid polypeptide reads, in one-letter code: UPF0149 protein PFL_5969 (185 aa).

Belongs to the UPF0149 family.

The sequence is that of UPF0149 protein PFL_5969 from Pseudomonas fluorescens (strain ATCC BAA-477 / NRRL B-23932 / Pf-5).